The sequence spans 237 residues: Uridylate kinase (237 aa).

Residue 12–15 (KLSG) coordinates ATP. The involved in allosteric activation by GTP stretch occupies residues 20 to 25 (GENGFG). G54 contacts UMP. ATP is bound by residues G55 and R59. Residues D72 and 133-140 (TGNPYFST) each bind UMP. 2 residues coordinate ATP: Y166 and D169.

Belongs to the UMP kinase family. As to quaternary structure, homohexamer.

It localises to the cytoplasm. The enzyme catalyses UMP + ATP = UDP + ADP. It participates in pyrimidine metabolism; CTP biosynthesis via de novo pathway; UDP from UMP (UMPK route): step 1/1. Its activity is regulated as follows. Allosterically activated by GTP. Inhibited by UTP. In terms of biological role, catalyzes the reversible phosphorylation of UMP to UDP. This Clostridium perfringens (strain SM101 / Type A) protein is Uridylate kinase.